We begin with the raw amino-acid sequence, 1000 residues long: DENN domain-containing protein 2A (1000 aa).

4 disordered regions span residues 1–155 (MLEA…LRFQ), 174–328 (DGSA…RKSY), 427–464 (KLLD…LGDL), and 491–525 (KRVK…LKAH). A compositionally biased stretch (polar residues) spans 34–43 (QLNSVPNSGP). Basic and acidic residues-rich tracts occupy residues 56–70 (IKDK…KEPP), 79–117 (DGQE…DSRA), 140–155 (SQHR…LRFQ), and 221–237 (HLEV…DWKG). 2 stretches are compositionally biased toward pro residues: residues 249–258 (PPKPFINPVP) and 288–307 (PPLP…PPPT). Over residues 427 to 436 (KLLDTRKLSR) the composition is skewed to basic and acidic residues. Polar residues predominate over residues 496-506 (LSQSTESNSGK). Ser544 carries the post-translational modification Phosphoserine. Residues 559 to 708 (EYFVVVSLHK…PFPALGKTII (150 aa)) enclose the uDENN domain. In terms of domain architecture, cDENN spans 730–863 (RLEHVDFESL…LQVALEHILE (134 aa)). The dDENN domain occupies 865 to 960 (RNDLACDQDG…QERELRRQDA (96 aa)).

It is found in the cytoplasm. It localises to the cytoskeleton. Functionally, guanine nucleotide exchange factor (GEF) which may activate RAB9A and RAB9B. Promotes the exchange of GDP to GTP, converting inactive GDP-bound Rab proteins into their active GTP-bound form. May play a role in late endosomes back to trans-Golgi network/TGN transport. The protein is DENN domain-containing protein 2A (Dennd2a) of Mus musculus (Mouse).